A 387-amino-acid polypeptide reads, in one-letter code: Cystathionine beta-lyase (387 aa).

At lysine 204 the chain carries N6-(pyridoxal phosphate)lysine.

It belongs to the trans-sulfuration enzymes family. Homotetramer. The cofactor is pyridoxal 5'-phosphate.

It localises to the cytoplasm. The catalysed reaction is L,L-cystathionine + H2O = L-homocysteine + pyruvate + NH4(+). The enzyme catalyses an S-substituted L-cysteine + H2O = a thiol + pyruvate + NH4(+). It functions in the pathway amino-acid biosynthesis; L-methionine biosynthesis via de novo pathway; L-homocysteine from L-cystathionine: step 1/1. In terms of biological role, catalyzes the cleavage of cystathionine to homocysteine, pyruvate and ammonia during methionine biosynthesis. The polypeptide is Cystathionine beta-lyase (metC) (Coxiella burnetii (strain RSA 493 / Nine Mile phase I)).